The following is a 362-amino-acid chain: MEVFLEMLLTAVVALLFSFLLAKLVSVATVENDLSSDQPLKPEIGVGVTEDVRFGMKMDARVLESQRNFQVVDENVELVDRFLSEEADRVYEVDEAVTGNAKICGDREAESSAAASSENYVIAEEVILVRGQDEQSDSAEAESISSVSPENVVAEEIKSQGQEEVTELGRSGCVENEESGGDVLVAESEEVRVEKSSNMVEESDAEAENEEKTELTIEEDDDWEGIERSELEKAFAAAVNLLEESGKAEEIGAEAKMELFGLHKIATEGSCREAQPMAVMISARAKWNAWQKLGNMSQEEAMEQYLALVSKEIPGLTKAGHTVGKMSEMETSVGLPPNSGSLEDPTNLVTTGVDESSKNGIP.

Residues 1-22 (MEVFLEMLLTAVVALLFSFLLA) form the signal peptide. 2 disordered regions span residues 132–151 (QDEQ…SPEN) and 193–214 (VEKS…EKTE). Residues 192 to 221 (RVEKSSNMVEESDAEAENEEKTELTIEEDD) adopt a coiled-coil conformation. Residues 231–318 (LEKAFAAAVN…VSKEIPGLTK (88 aa)) enclose the ACB domain. An acyl-CoA is bound by residues 260-264 (FGLHK), K286, and Y305. The tract at residues 329-362 (METSVGLPPNSGSLEDPTNLVTTGVDESSKNGIP) is disordered.

It belongs to the ACBP family. Expressed in roots, stems, leaves, flowers and siliques.

The protein localises to the secreted. Its subcellular location is the extracellular space. Its function is as follows. Binds medium- and long-chain acyl-CoA esters with very high affinity. Can interact in vitro with arachidonyl-CoA, barely with oleoyl-CoA, but not with palmitoyl-CoA. This chain is Acyl-CoA-binding domain-containing protein 3 (ACBP3), found in Arabidopsis thaliana (Mouse-ear cress).